Consider the following 204-residue polypeptide: Putative AgrB-like protein (204 aa).

The next 5 helical transmembrane spans lie at 51-73, 87-107, 111-131, 151-168, and 173-190; these read VYGIALVTGLLLQTVTVHLSYLW, LNCTLISLTMFVLAPFIFQNI, NWIVLGTFAFILLNMFLFAPA, AMIGTLILTGIALLIPFA, and LIMVGSLFQVISINPLTY.

It belongs to the AgrB family.

The protein resides in the cell membrane. May be involved in the proteolytic processing of a quorum sensing system signal molecule precursor. The protein is Putative AgrB-like protein of Listeria innocua serovar 6a (strain ATCC BAA-680 / CLIP 11262).